A 51-amino-acid polypeptide reads, in one-letter code: Small ribosomal subunit protein eS31 (51 aa).

4 residues coordinate Zn(2+): C21, C24, C39, and C42. The C4-type zinc-finger motif lies at 21–42 (CVRCSNGVFMADHGDRYACGKC).

This sequence belongs to the eukaryotic ribosomal protein eS31 family. Part of the 30S ribosomal subunit. Zn(2+) is required as a cofactor.

In Methanothermobacter thermautotrophicus (strain ATCC 29096 / DSM 1053 / JCM 10044 / NBRC 100330 / Delta H) (Methanobacterium thermoautotrophicum), this protein is Small ribosomal subunit protein eS31.